Here is a 197-residue protein sequence, read N- to C-terminus: Molybdenum cofactor guanylyltransferase (197 aa).

GTP-binding positions include 12-14 (LAG), K25, N53, D71, and D101. Position 101 (D101) interacts with Mg(2+).

Belongs to the MobA family. Monomer. It depends on Mg(2+) as a cofactor.

The protein localises to the cytoplasm. The catalysed reaction is Mo-molybdopterin + GTP + H(+) = Mo-molybdopterin guanine dinucleotide + diphosphate. Its function is as follows. Transfers a GMP moiety from GTP to Mo-molybdopterin (Mo-MPT) cofactor (Moco or molybdenum cofactor) to form Mo-molybdopterin guanine dinucleotide (Mo-MGD) cofactor. This Bordetella pertussis (strain Tohama I / ATCC BAA-589 / NCTC 13251) protein is Molybdenum cofactor guanylyltransferase.